Reading from the N-terminus, the 259-residue chain is Chymotrypsin-1 (259 aa).

A signal peptide spans 1–17 (MLRKVFAVVSVLLVVSA). The propeptide at 18–32 (AKVTKLVLDDNYVNR) is activation peptide. Positions 33–255 (VVGGEVAKNG…YHDWVRTTMA (223 aa)) constitute a Peptidase S1 domain. A disulfide bridge links cysteine 59 with cysteine 75. Active-site charge relay system residues include histidine 74 and aspartate 119. Disulfide bonds link cysteine 182–cysteine 198 and cysteine 208–cysteine 232. The Charge relay system role is filled by serine 212.

This sequence belongs to the peptidase S1 family. After blood feeding, expression is induced in the midgut epithelium, followed by secretion into the midgut lumen.

It is found in the secreted. The enzyme catalyses Preferential cleavage: Tyr-|-Xaa, Trp-|-Xaa, Phe-|-Xaa, Leu-|-Xaa.. The protein is Chymotrypsin-1 (CHYM1) of Anopheles gambiae (African malaria mosquito).